Here is a 465-residue protein sequence, read N- to C-terminus: MIRTRFAPSPTGYLHIGGARTALFSWAYARKHGGKFVLRIEDTDLERSTAQSTQAILDGMAWLGLDYDEGPFYQMQRLARYHEVAEQLLRRGQAYYCYCSREELDAMREQQRAAGLKPRYDGRWRDSREEPPAGVKPVVRLKNPLDGEVTFKDLIKGEITVANSELDDLVLLRGDGVPTYNFGVVIDDLDMNITHVIRGDDHVNNTPRQINILKALGAPLPQYAHVPMILGADGERLSKRHGAVSVMQYREDGYLPEALVNYLARLGWSHGDEEIFSREQLVEWFDLSNINRSPAKFNPEKLQWLNQQYLKTADNERLAELVKPFLAADGCDVTGGGTPDLRKVMNLLKERVNTIAELADAAVYFFRPLEPAEELRAQYFSAEAKGPILDLRTKLATLEWEGHAINDAIKASATAHGVKMPKVAMPLRVMVTGEAQTPAINAVLELLGREETLRRMDRQLEYFLS.

The 'HIGH' region signature appears at 8-18 (PSPTGYLHIGG). Positions 236–240 (RLSKR) match the 'KMSKS' region motif. Lysine 239 contributes to the ATP binding site.

Belongs to the class-I aminoacyl-tRNA synthetase family. Glutamate--tRNA ligase type 1 subfamily. As to quaternary structure, monomer.

Its subcellular location is the cytoplasm. It catalyses the reaction tRNA(Glu) + L-glutamate + ATP = L-glutamyl-tRNA(Glu) + AMP + diphosphate. Its function is as follows. Catalyzes the attachment of glutamate to tRNA(Glu) in a two-step reaction: glutamate is first activated by ATP to form Glu-AMP and then transferred to the acceptor end of tRNA(Glu). This is Glutamate--tRNA ligase from Nitrosospira multiformis (strain ATCC 25196 / NCIMB 11849 / C 71).